Here is a 199-residue protein sequence, read N- to C-terminus: Potassium-transporting ATPase KdpC subunit (199 aa).

Residues 7–27 form a helical membrane-spanning segment; sequence PAIVLLLALTLLTGLAYPLAM. The interval 67–86 is disordered; it reads HGRPSATTAADPQDSSKTVP. The segment covering 71 to 84 has biased composition (polar residues); the sequence is SATTAADPQDSSKT.

It belongs to the KdpC family. As to quaternary structure, the system is composed of three essential subunits: KdpA, KdpB and KdpC.

The protein resides in the cell inner membrane. In terms of biological role, part of the high-affinity ATP-driven potassium transport (or Kdp) system, which catalyzes the hydrolysis of ATP coupled with the electrogenic transport of potassium into the cytoplasm. This subunit acts as a catalytic chaperone that increases the ATP-binding affinity of the ATP-hydrolyzing subunit KdpB by the formation of a transient KdpB/KdpC/ATP ternary complex. This Rhodopseudomonas palustris (strain BisB18) protein is Potassium-transporting ATPase KdpC subunit.